Here is a 367-residue protein sequence, read N- to C-terminus: MSETLVVKIGTSSLTNPHHPGLALSTIAGLVEVICQLRRQGYNVVLVSSGAVGVGCTRLGLRDRPSRIAQRQAIAAVGQGRLMRTYDDLFTTLGQPIAQVLLTRGDLAQRQRYINAYQTFQELFELGVVPIVNENDTVAVEELKFGDNDTLSALVASLVEAQWLFLLTDVDRLYTADPRQDPNAKPITIVHDLSELESIQAGGQGSRWGTGGMATKLTAAKIATQASVRTVITQGRSPENLLKILAGEAIGTWFEPQPETVNARKRWIAHGLVPTGKLLLDAGAVQAIQAGGKSLLAAGIQAIEGDFEAQDAVQLCDLNGTEIARGLVNYDSHELQQIRGCQSDQIVQILGYEGAETIVHRDNLVLS.

Position 8 (K8) interacts with ATP. Residues S49, D136, and N148 each contribute to the substrate site. ATP is bound by residues T168–D169 and T210–K216. In terms of domain architecture, PUA spans T275 to E353.

It belongs to the glutamate 5-kinase family.

Its subcellular location is the cytoplasm. The catalysed reaction is L-glutamate + ATP = L-glutamyl 5-phosphate + ADP. Its pathway is amino-acid biosynthesis; L-proline biosynthesis; L-glutamate 5-semialdehyde from L-glutamate: step 1/2. Catalyzes the transfer of a phosphate group to glutamate to form L-glutamate 5-phosphate. The protein is Glutamate 5-kinase of Synechococcus elongatus (strain ATCC 33912 / PCC 7942 / FACHB-805) (Anacystis nidulans R2).